The chain runs to 183 residues: uncharacterized protein (183 aa).

Belongs to the herpesviridae US1 family.

This is an uncharacterized protein from Human cytomegalovirus (strain AD169) (HHV-5).